We begin with the raw amino-acid sequence, 409 residues long: NADH-quinone oxidoreductase subunit D (409 aa).

Belongs to the complex I 49 kDa subunit family. As to quaternary structure, NDH-1 is composed of 14 different subunits. Subunits NuoB, C, D, E, F, and G constitute the peripheral sector of the complex.

It is found in the cell inner membrane. The catalysed reaction is a quinone + NADH + 5 H(+)(in) = a quinol + NAD(+) + 4 H(+)(out). NDH-1 shuttles electrons from NADH, via FMN and iron-sulfur (Fe-S) centers, to quinones in the respiratory chain. The immediate electron acceptor for the enzyme in this species is believed to be ubiquinone. Couples the redox reaction to proton translocation (for every two electrons transferred, four hydrogen ions are translocated across the cytoplasmic membrane), and thus conserves the redox energy in a proton gradient. This chain is NADH-quinone oxidoreductase subunit D, found in Helicobacter pylori (strain Shi470).